The primary structure comprises 614 residues: MMQVLLVTICLAVFPYQGSSIILESGNVNDYEVVYPQKITALPKGAIQQPEQKYEDAIKYEFKVNGKPVVLHLEKNKGLFSEDYSETHYTPDGREITINPPVEDHCYYHGRIQNDADSTASISACNGLKGHFKLQGEMYLIEPLRIPDSEAHAIYKYENIEKEDEAPKMCGVTQTNWESDEPIKASQLNLTPEQRTYLKSKKYVELVIVADYIMFWKYDRSLSTIRTRIYEIVNTLNVIYRFLNIYIALVAVEIWSKGDLINVTSSAYDTLDSFGEWRERDLLNRKRHDNAQLLTGINFNGPSAGRGFVGRMCQPKYSVGIVQDHSKIYLLVASAMAHEMGHNLGMDHDRIDCTCGAKSCIMSGILRCETSYLFSDCSREEHRKYLINKMPQCILNKPLKTDIVSPAVCGNYFVEVGEECDCGSPANCQDRCCDAATCKLRPGAQCGDGVCCYQCKFRRAGTVCRPANGECDVSDLCTGQSAECPTDQFQRNGQPCQNNKGYCYNGTCPIMEKQCISLFGASATVAQDSCFQFNRRGNHYGYCRKENNTKIACAPEDVKCGRLYCLDNSSGHKNPCQIYYIPSDENKGMVDPGTKCGDGMVCSNGKCVDVTIAY.

An N-terminal signal peptide occupies residues 1 to 20 (MMQVLLVTICLAVFPYQGSS). The propeptide occupies 21–193 (IILESGNVND…KASQLNLTPE (173 aa)). Q194 carries the post-translational modification Pyrrolidone carboxylic acid. Residues 202-398 (KYVELVIVAD…KMPQCILNKP (197 aa)) enclose the Peptidase M12B domain. E205 lines the Ca(2+) pocket. N-linked (GlcNAc...) asparagine glycosylation is present at N262. D289 provides a ligand contact to Ca(2+). 3 disulfides stabilise this stretch: C313-C393, C353-C377, and C355-C360. Position 338 (H338) interacts with Zn(2+). Residue E339 is part of the active site. Zn(2+) contacts are provided by H342 and H348. The Ca(2+) site is built by C393, N396, V408, N411, F413, E415, E418, and D421. One can recognise a Disintegrin domain in the interval 406-492 (PAVCGNYFVE…ECPTDQFQRN (87 aa)). Cystine bridges form between C409-C438, C420-C433, C422-C428, C432-C455, C446-C452, C451-C477, C464-C484, C471-C503, C496-C508, C515-C565, C530-C576, C543-C553, C560-C602, and C596-C607. A D/ECD-tripeptide motif is present at residues 470-472 (ECD). 3 N-linked (GlcNAc...) asparagine glycosylation sites follow: N505, N547, and N568.

The protein belongs to the venom metalloproteinase (M12B) family. P-III subfamily. P-IIIc sub-subfamily. As to quaternary structure, heterodimer; disulfide-linked. Requires Zn(2+) as cofactor. The N-terminus is blocked. In terms of tissue distribution, expressed by the venom gland.

The protein localises to the secreted. Inhibited by EDTA or 1,10-phenanthroline. Not inhibited by PMSF. In terms of biological role, this metalloproteinase hydrolyzes azocasein, and insulin B-chain (at the '38-Ala-|-Leu-39' bond). Also hydrolyzes the Aalpha-chain (FGA) and more slowly the Bbeta-chain of fibrinogen (FGB), without affecting the gamma-chain. Cleaves alpha-chain of fibrinogen at '432-Lys-|-Leu-433' and '535-Pro-|-Met-536' bonds. Does not cleave fibrin. Inhibits endothelial cell adhesion to extracellular matrix proteins such as fibrinogen, fibronectin, vitronectin, collagen I, and collagen IV. Induces apoptosis in vascular endothelial cells. The sequence is that of Zinc metalloproteinase-disintegrin-like VLAIP-B from Macrovipera lebetinus (Levantine viper).